The chain runs to 997 residues: Protein translocase subunit SecA (997 aa).

Residues Gln-84, 102-106, and Asp-582 each bind ATP; that span reads GEGKT. Residues 950–997 are disordered; that stretch reads PYVPVPEAKPEPSEVFGVERKRATPPPQPGLSRAERRRLMRQEKKRKK. Over residues 957–971 the composition is skewed to basic and acidic residues; it reads AKPEPSEVFGVERKR. A compositionally biased stretch (basic residues) spans 984–997; sequence ERRRLMRQEKKRKK.

The protein belongs to the SecA family. In terms of assembly, monomer and homodimer. Part of the essential Sec protein translocation apparatus which comprises SecA, SecYEG and auxiliary proteins SecDF. Other proteins may also be involved.

The protein localises to the cell inner membrane. Its subcellular location is the cytoplasm. The catalysed reaction is ATP + H2O + cellular proteinSide 1 = ADP + phosphate + cellular proteinSide 2.. Its function is as follows. Part of the Sec protein translocase complex. Interacts with the SecYEG preprotein conducting channel. Has a central role in coupling the hydrolysis of ATP to the transfer of proteins into and across the cell membrane, serving as an ATP-driven molecular motor driving the stepwise translocation of polypeptide chains across the membrane. The chain is Protein translocase subunit SecA from Thermus thermophilus (strain ATCC BAA-163 / DSM 7039 / HB27).